Here is a 147-residue protein sequence, read N- to C-terminus: Sec-independent protein translocase protein TatB (147 aa).

The chain crosses the membrane as a helical span at residues 1-21 (MFDIGFWELVVIGVVALVVLG). The segment at 114 to 147 (EPVAPISVATPDEEPTVIPAARAQPSAEQGEVKP) is disordered.

Belongs to the TatB family. As to quaternary structure, the Tat system comprises two distinct complexes: a TatABC complex, containing multiple copies of TatA, TatB and TatC subunits, and a separate TatA complex, containing only TatA subunits. Substrates initially bind to the TatABC complex, which probably triggers association of the separate TatA complex to form the active translocon.

The protein localises to the cell inner membrane. Functionally, part of the twin-arginine translocation (Tat) system that transports large folded proteins containing a characteristic twin-arginine motif in their signal peptide across membranes. Together with TatC, TatB is part of a receptor directly interacting with Tat signal peptides. TatB may form an oligomeric binding site that transiently accommodates folded Tat precursor proteins before their translocation. This is Sec-independent protein translocase protein TatB from Aeromonas hydrophila subsp. hydrophila (strain ATCC 7966 / DSM 30187 / BCRC 13018 / CCUG 14551 / JCM 1027 / KCTC 2358 / NCIMB 9240 / NCTC 8049).